Consider the following 595-residue polypeptide: Acriflavine sensitivity control protein acr-2 (595 aa).

A DNA-binding region (zn(2)-C6 fungal-type) is located at residues 22–49; sequence CYNCHRKRLRCDKSLPACLKCSINGEEC. Residues 69–88 are compositionally biased toward low complexity; it reads TTRTTNKTNFNGTNTTTPRT. A disordered region spans residues 69–172; the sequence is TTRTTNKTNF…PDDNPDPSSQ (104 aa). A compositionally biased stretch (polar residues) spans 89 to 117; that stretch reads VKSSTPTQAPTPSDSPRQLDTDVTSSSAP. Residues 118–138 are compositionally biased toward low complexity; that stretch reads SHTCSRSTTTSTTTTRISSPT.

The protein localises to the nucleus. In terms of biological role, probable transcriptional regulator. The sequence is that of Acriflavine sensitivity control protein acr-2 (acr-2) from Neurospora crassa (strain ATCC 24698 / 74-OR23-1A / CBS 708.71 / DSM 1257 / FGSC 987).